A 384-amino-acid chain; its full sequence is Lipid-A-disaccharide synthase (384 aa).

It belongs to the LpxB family.

It carries out the reaction 2-N,3-O-bis[(3R)-3-hydroxytetradecanoyl]-alpha-D-glucosaminyl 1-phosphate + UDP-2-N,3-O-bis[(3R)-3-hydroxytetradecanoyl]-alpha-D-glucosamine = lipid A disaccharide (E. coli) + UDP + H(+). It catalyses the reaction a lipid X + a UDP-2-N,3-O-bis[(3R)-3-hydroxyacyl]-alpha-D-glucosamine = a lipid A disaccharide + UDP + H(+). The protein operates within glycolipid biosynthesis; lipid IV(A) biosynthesis; lipid IV(A) from (3R)-3-hydroxytetradecanoyl-[acyl-carrier-protein] and UDP-N-acetyl-alpha-D-glucosamine: step 5/6. Condensation of UDP-2,3-diacylglucosamine and 2,3-diacylglucosamine-1-phosphate to form lipid A disaccharide, a precursor of lipid A, a phosphorylated glycolipid that anchors the lipopolysaccharide to the outer membrane of the cell. In Blochmanniella floridana, this protein is Lipid-A-disaccharide synthase.